A 152-amino-acid polypeptide reads, in one-letter code: Large ribosomal subunit protein bL9 (152 aa).

This sequence belongs to the bacterial ribosomal protein bL9 family.

Binds to the 23S rRNA. The chain is Large ribosomal subunit protein bL9 from Prochlorococcus marinus (strain SARG / CCMP1375 / SS120).